A 62-amino-acid polypeptide reads, in one-letter code: Large ribosomal subunit protein uL30 (62 aa).

The protein belongs to the universal ribosomal protein uL30 family. Part of the 50S ribosomal subunit.

The polypeptide is Large ribosomal subunit protein uL30 (Heliobacterium modesticaldum (strain ATCC 51547 / Ice1)).